Reading from the N-terminus, the 245-residue chain is Ribonuclease PH (245 aa).

Phosphate is bound by residues Arg-87 and 125 to 127 (GTR).

This sequence belongs to the RNase PH family. Homohexameric ring arranged as a trimer of dimers.

It carries out the reaction tRNA(n+1) + phosphate = tRNA(n) + a ribonucleoside 5'-diphosphate. Phosphorolytic 3'-5' exoribonuclease that plays an important role in tRNA 3'-end maturation. Removes nucleotide residues following the 3'-CCA terminus of tRNAs; can also add nucleotides to the ends of RNA molecules by using nucleoside diphosphates as substrates, but this may not be physiologically important. Probably plays a role in initiation of 16S rRNA degradation (leading to ribosome degradation) during starvation. The polypeptide is Ribonuclease PH (Streptomyces griseus subsp. griseus (strain JCM 4626 / CBS 651.72 / NBRC 13350 / KCC S-0626 / ISP 5235)).